The sequence spans 825 residues: Probable inorganic carbon transporter subunit DabA (825 aa).

Residues cysteine 334, aspartate 336, histidine 521, and cysteine 536 each contribute to the Zn(2+) site.

This sequence belongs to the inorganic carbon transporter (TC 9.A.2) DabA family. Forms a complex with DabB. Zn(2+) is required as a cofactor.

The protein resides in the cell inner membrane. Functionally, part of an energy-coupled inorganic carbon pump. The chain is Probable inorganic carbon transporter subunit DabA from Acidithiobacillus ferrooxidans (strain ATCC 53993 / BNL-5-31) (Leptospirillum ferrooxidans (ATCC 53993)).